Here is a 505-residue protein sequence, read N- to C-terminus: tRNA-2-methylthio-N(6)-dimethylallyladenosine synthase (505 aa).

Positions Arg10–His126 constitute an MTTase N-terminal domain. [4Fe-4S] cluster-binding residues include Cys19, Cys55, Cys89, Cys163, Cys167, and Cys170. The Radical SAM core domain occupies Arg149–Glu385. One can recognise a TRAM domain in the interval Gln388 to Val459.

This sequence belongs to the methylthiotransferase family. MiaB subfamily. In terms of assembly, monomer. The cofactor is [4Fe-4S] cluster.

It is found in the cytoplasm. The enzyme catalyses N(6)-dimethylallyladenosine(37) in tRNA + (sulfur carrier)-SH + AH2 + 2 S-adenosyl-L-methionine = 2-methylsulfanyl-N(6)-dimethylallyladenosine(37) in tRNA + (sulfur carrier)-H + 5'-deoxyadenosine + L-methionine + A + S-adenosyl-L-homocysteine + 2 H(+). In terms of biological role, catalyzes the methylthiolation of N6-(dimethylallyl)adenosine (i(6)A), leading to the formation of 2-methylthio-N6-(dimethylallyl)adenosine (ms(2)i(6)A) at position 37 in tRNAs that read codons beginning with uridine. The chain is tRNA-2-methylthio-N(6)-dimethylallyladenosine synthase from Rhodococcus jostii (strain RHA1).